The primary structure comprises 258 residues: Type III pantothenate kinase (258 aa).

D6–V13 serves as a coordination point for ATP. Substrate-binding positions include Y100 and G107–R110. The Proton acceptor role is filled by D109. D129 contributes to the K(+) binding site. ATP is bound at residue T132. T184 is a substrate binding site.

The protein belongs to the type III pantothenate kinase family. As to quaternary structure, homodimer. NH4(+) is required as a cofactor. Requires K(+) as cofactor.

The protein resides in the cytoplasm. It carries out the reaction (R)-pantothenate + ATP = (R)-4'-phosphopantothenate + ADP + H(+). It participates in cofactor biosynthesis; coenzyme A biosynthesis; CoA from (R)-pantothenate: step 1/5. Not regulated by feedback inhibition by CoA and its thioesters as described for many other pantothenate kinases. Not inhibited by N-pentylpantothenamide (N5-Pan), and this compound cannot act as a substrate either. Its function is as follows. Catalyzes the phosphorylation of pantothenate (Pan), the first step in CoA biosynthesis. Cannot utilize a phosphoryl donor other than ATP. The polypeptide is Type III pantothenate kinase (coaX) (Bacillus subtilis (strain 168)).